The sequence spans 434 residues: FAD-dependent monooxygenase cfoG (434 aa).

Residues 1 to 22 (MKSSPGLHIIIVGAGITGLATA) form the signal peptide. Residue Glu-36 coordinates FAD. Residues Arg-193 and Tyr-233 contribute to the active site. FAD is bound by residues Asp-314 and Gly-327.

The protein belongs to the paxM FAD-dependent monooxygenase family. In terms of assembly, monomer. FAD serves as cofactor.

It functions in the pathway secondary metabolite biosynthesis; flavonoid biosynthesis. Functionally, monooxygenase; part of the gene cluster that mediates the biosynthesis of chlorflavonin, a fungal flavonoid with acetolactate synthase inhibitory activity. Within the pathway, cfoG is responsible for the hydroxylation of the flavonoid skeleton at position C8. The pathway begins with the PKS-NRPS hybrid synthetase cfoA that uses benzoic acid or p-hydroxybenzoic acid as a starter unit with four rounds of chain elongation using malonyl-CoA to form the chalcone skeleton. Then, a new type of chalcone isomerase, cfoK, catalyzes the conversion of the chalcone into a flavanone by a histidine-mediated oxa-Michael addition mechanism. The desaturation of flavanone to flavone is catalyzed by a new type of flavone synthase, the flavin mononucleotide (FMN)-dependent oxidoreductase cfoJ. Monooxygenases cfoF, cfoG, and P450 cfoH are responsible for the hydroxylation of the flavonoid skeleton at sites C3, C8, and C2', respectively. Like cfoF, the dehydratase cfoI plays also a role in the hydroxylation of position C3. Methyltransferases cfoB, cfoC, and cfoD then catalyze the methylation of C7-OH, C8-OH, and C3-OH, respectively. Finally, the monooxygenase cfoE is responsible for the chlorination of flavonoid at position C3'. The chain is FAD-dependent monooxygenase cfoG from Aspergillus candidus.